The sequence spans 431 residues: Histidine--tRNA ligase (431 aa).

This sequence belongs to the class-II aminoacyl-tRNA synthetase family. As to quaternary structure, homodimer.

Its subcellular location is the cytoplasm. It carries out the reaction tRNA(His) + L-histidine + ATP = L-histidyl-tRNA(His) + AMP + diphosphate + H(+). The polypeptide is Histidine--tRNA ligase (hisS) (Leifsonia xyli subsp. xyli (strain CTCB07)).